Consider the following 148-residue polypeptide: Large ribosomal subunit protein uL16 (148 aa).

This sequence belongs to the universal ribosomal protein uL16 family. In terms of assembly, part of the 50S ribosomal subunit.

Binds 23S rRNA and is also seen to make contacts with the A and possibly P site tRNAs. The chain is Large ribosomal subunit protein uL16 from Gloeobacter violaceus (strain ATCC 29082 / PCC 7421).